Consider the following 148-residue polypeptide: Large ribosomal subunit protein uL15 (148 aa).

Positions 1–30 (MPSRLRKTRKLRGHVSHGHGRIGKHRKHPG) are enriched in basic residues. A disordered region spans residues 1 to 37 (MPSRLRKTRKLRGHVSHGHGRIGKHRKHPGGRGNAGG). H39 is modified ((3S)-3-hydroxyhistidine). N6-acetyllysine occurs at positions 47 and 55. S68 is subject to Phosphoserine. K110 bears the N6-acetyllysine mark.

This sequence belongs to the universal ribosomal protein uL15 family. As to quaternary structure, component of the large ribosomal subunit. Post-translationally, hydroxylated on His-39 by MINA.

The protein resides in the cytoplasm. Component of the large ribosomal subunit. The ribosome is a large ribonucleoprotein complex responsible for the synthesis of proteins in the cell. This is Large ribosomal subunit protein uL15 (Rpl27a) from Mus musculus (Mouse).